We begin with the raw amino-acid sequence, 298 residues long: 4-diphosphocytidyl-2-C-methyl-D-erythritol kinase (298 aa).

The active site involves Lys-11. 94-104 is a binding site for ATP; the sequence is PMGGGLGGGSS. Residue Asp-136 is part of the active site.

Belongs to the GHMP kinase family. IspE subfamily.

It catalyses the reaction 4-CDP-2-C-methyl-D-erythritol + ATP = 4-CDP-2-C-methyl-D-erythritol 2-phosphate + ADP + H(+). It functions in the pathway isoprenoid biosynthesis; isopentenyl diphosphate biosynthesis via DXP pathway; isopentenyl diphosphate from 1-deoxy-D-xylulose 5-phosphate: step 3/6. In terms of biological role, catalyzes the phosphorylation of the position 2 hydroxy group of 4-diphosphocytidyl-2C-methyl-D-erythritol. This chain is 4-diphosphocytidyl-2-C-methyl-D-erythritol kinase, found in Chromohalobacter salexigens (strain ATCC BAA-138 / DSM 3043 / CIP 106854 / NCIMB 13768 / 1H11).